The following is a 151-amino-acid chain: NPC intracellular cholesterol transporter 2 (151 aa).

A signal peptide spans 1 to 19; sequence MRFLAATFLLLALSTAAQA. 3 disulfide bridges follow: Cys27–Cys140, Cys42–Cys47, and Cys93–Cys99. Asn58 carries an N-linked (GlcNAc...) asparagine glycan. N6-acetyllysine is present on Lys116. A glycan (N-linked (GlcNAc...) asparagine) is linked at Asn135.

Belongs to the NPC2 family. Interacts with NPC1 (via the second lumenal domain) in a cholestrol-dependent manner. Interacts with NUS1/NgBR, the interaction stabilizes NCP2 and regulates cholesterol trafficking. Interacts with DHDDS. Interacts with NEDD4L (via C2 domain). Interacts with NPC1L1. Detected in gallbladder bile. Detected in fibroblasts, kidney, liver, spleen, small intestine, placenta and testis (at protein level). Epididymis.

The protein localises to the secreted. The protein resides in the endoplasmic reticulum. It localises to the lysosome. The enzyme catalyses cholesterol(in) = cholesterol(out). Functionally, intracellular cholesterol transporter which acts in concert with NPC1 and plays an important role in the egress of cholesterol from the lysosomal compartment. Unesterified cholesterol that has been released from LDLs in the lumen of the late endosomes/lysosomes is transferred by NPC2 to the cholesterol-binding pocket in the N-terminal domain of NPC1. May bind and mobilize cholesterol that is associated with membranes. NPC2 binds cholesterol with a 1:1 stoichiometry. Can bind a variety of sterols, including lathosterol, desmosterol and the plant sterols stigmasterol and beta-sitosterol. The secreted form of NCP2 regulates biliary cholesterol secretion via stimulation of ABCG5/ABCG8-mediated cholesterol transport. This is NPC intracellular cholesterol transporter 2 from Homo sapiens (Human).